We begin with the raw amino-acid sequence, 408 residues long: Acetate kinase (408 aa).

Asn-10 provides a ligand contact to Mg(2+). Residue Lys-17 coordinates ATP. Arg-96 serves as a coordination point for substrate. The active-site Proton donor/acceptor is the Asp-153. ATP-binding positions include 213–217 (HLGNG) and 288–290 (DLR). Mg(2+) is bound at residue Glu-393.

Belongs to the acetokinase family. Homodimer. Mg(2+) is required as a cofactor. The cofactor is Mn(2+).

The protein resides in the cytoplasm. The enzyme catalyses acetate + ATP = acetyl phosphate + ADP. Its pathway is metabolic intermediate biosynthesis; acetyl-CoA biosynthesis; acetyl-CoA from acetate: step 1/2. In terms of biological role, catalyzes the formation of acetyl phosphate from acetate and ATP. Can also catalyze the reverse reaction. The chain is Acetate kinase from Borrelia recurrentis (strain A1).